A 185-amino-acid polypeptide reads, in one-letter code: Peptidyl-tRNA hydrolase (185 aa).

Position 14 (Tyr-14) interacts with tRNA. Residue His-19 is the Proton acceptor of the active site. Positions 64, 66, and 112 each coordinate tRNA.

The protein belongs to the PTH family. As to quaternary structure, monomer.

The protein localises to the cytoplasm. The enzyme catalyses an N-acyl-L-alpha-aminoacyl-tRNA + H2O = an N-acyl-L-amino acid + a tRNA + H(+). Functionally, hydrolyzes ribosome-free peptidyl-tRNAs (with 1 or more amino acids incorporated), which drop off the ribosome during protein synthesis, or as a result of ribosome stalling. Catalyzes the release of premature peptidyl moieties from peptidyl-tRNA molecules trapped in stalled 50S ribosomal subunits, and thus maintains levels of free tRNAs and 50S ribosomes. The chain is Peptidyl-tRNA hydrolase from Alkaliphilus oremlandii (strain OhILAs) (Clostridium oremlandii (strain OhILAs)).